Reading from the N-terminus, the 327-residue chain is Pyruvate dehydrogenase E1 component subunit beta (327 aa).

Glu60 serves as a coordination point for thiamine diphosphate. Residues Ile113, Ala161, Ile162, and Asn166 each contribute to the K(+) site.

Heterodimer of an alpha and a beta chain. The cofactor is thiamine diphosphate.

The protein resides in the plastid. The protein localises to the chloroplast. It catalyses the reaction N(6)-[(R)-lipoyl]-L-lysyl-[protein] + pyruvate + H(+) = N(6)-[(R)-S(8)-acetyldihydrolipoyl]-L-lysyl-[protein] + CO2. Functionally, the pyruvate dehydrogenase complex catalyzes the overall conversion of pyruvate to acetyl-CoA and CO(2). It contains multiple copies of three enzymatic components: pyruvate dehydrogenase (E1), dihydrolipoamide acetyltransferase (E2) and lipoamide dehydrogenase (E3). In Mesostigma viride (Green alga), this protein is Pyruvate dehydrogenase E1 component subunit beta (pdhB).